The sequence spans 354 residues: Protein RecA (354 aa).

67–74 provides a ligand contact to ATP; the sequence is GPESSGKT. The disordered stretch occupies residues 331 to 354; sequence NQDSTPDFSVDDNGEGVKETNEDF. Over residues 345 to 354 the composition is skewed to basic and acidic residues; the sequence is EGVKETNEDF.

The protein belongs to the RecA family.

The protein resides in the cytoplasm. Can catalyze the hydrolysis of ATP in the presence of single-stranded DNA, the ATP-dependent uptake of single-stranded DNA by duplex DNA, and the ATP-dependent hybridization of homologous single-stranded DNAs. It interacts with LexA causing its activation and leading to its autocatalytic cleavage. In Citrobacter koseri (strain ATCC BAA-895 / CDC 4225-83 / SGSC4696), this protein is Protein RecA.